Consider the following 560-residue polypeptide: MTTTATQHFAQLLQKYGIDTVFGIVGIPIVQLADTMVANGIKFIPCRNEQAASYAASAYGYISDKPGVLLIVGGPGLIHALAGIYNSMSNRWPLLVIAGSSSQSDIHKGGFQELDQVSLLSPFLKFTGKLTPDNIDMITQKALNYCIQGTAGVSYIDVPADFIEYEKPLEGNDRTGNELPMILTPNICGPDPSKIKKVVQLILQHKNKNILIVIGKGAVKNSHEIRRLVNTFNLPFLPTPMAKGIVPDSSPLNVSSARSQALKIADIVLVLGARLNWILHFGTSPKWNSESIFIQFDSNPETLGDNNVSPGADLSIWGDIGLSVTALVEELTRQDSCWKYSGVKQEIREKIQLNQTRLLRKEKTRGAQLNYNQVYGTLRPLIDDYRTILVTEGANTMDIARISFPTDAPRRRLDAGTNATMGIGLGYALACKASHPELDVVLIQGDSAFGFSAMEIETAVRCQLALVIVVMNNSGIYHGEKDIEGDLPPTALSKNCRYDLVGKGLGANDFFVNTISELSRCFQQAVQLSRTKRETSVINVIIEPGEQKQIAFAWQNKPRL.

Glu49 provides a ligand contact to thiamine diphosphate. Positions 446 and 473 each coordinate Mg(2+). Residues 558-560 (PRL) carry the Peroxisomal target signal 1 (PTS1) motif.

It belongs to the TPP enzyme family. It depends on Mg(2+) as a cofactor. Thiamine diphosphate serves as cofactor.

The protein resides in the cytoplasm. The protein localises to the peroxisome matrix. The enzyme catalyses an (R)-2-hydroxy-long-chain-fatty acyl-CoA = a long-chain fatty aldehyde + formyl-CoA. The catalysed reaction is a 2-hydroxy-3-methyl fatty acyl-CoA = a 2-methyl-branched fatty aldehyde + formyl-CoA. Functionally, catalyzes a carbon-carbon cleavage reaction; cleaves a 2-hydroxy-3-methylacyl-CoA into formyl-CoA and a 2-methyl-branched fatty aldehyde. The sequence is that of 2-hydroxyacyl-CoA lyase from Saccharomyces cerevisiae (strain ATCC 204508 / S288c) (Baker's yeast).